Consider the following 221-residue polypeptide: Proline-rich protein 20A (221 aa).

Disordered stretches follow at residues 1-103 and 137-174; these read MEEP…QRQG and SLSETGPPPGTVQEGPGPDVAQPELGFQEPPAAPGPQA. Over residues 42-53 the composition is skewed to low complexity; sequence PAQPAQPAKPIA. Over residues 63–72 the composition is skewed to pro residues; it reads PARPESPPPA. Positions 75–93 are enriched in basic residues; that stretch reads GRRRGGSRRPGRGRGRRAG.

It belongs to the PRR20 family.

In Homo sapiens (Human), this protein is Proline-rich protein 20A (PRR20A).